We begin with the raw amino-acid sequence, 1026 residues long: Beta-galactosidase (1026 aa).

Glu458 (proton donor) is an active-site residue. The Nucleophile role is filled by Glu546.

Belongs to the glycosyl hydrolase 2 family.

It carries out the reaction Hydrolysis of terminal non-reducing beta-D-galactose residues in beta-D-galactosides.. This Streptococcus thermophilus protein is Beta-galactosidase (lacZ).